The following is a 289-amino-acid chain: Dual-specificity RNA pseudouridine synthase RluF (289 aa).

One can recognise an S4 RNA-binding domain in the interval 7–74; that stretch reads TRLNKYISES…DDLVLIALNK (68 aa). Interaction with RNA stretches follow at residues 105–108 and 187–190; these read RLDK and RQIR. The active-site Nucleophile is Asp107. The tract at residues 241-289 is disordered; sequence SEAKPKAKAKPKTAGIKRPVVAIEKSNEKARPASSGKRFTSPGRKKKGR.

This sequence belongs to the pseudouridine synthase RsuA family. In terms of assembly, monomer.

The enzyme catalyses uridine(2604) in 23S rRNA = pseudouridine(2604) in 23S rRNA. It carries out the reaction uridine(35) in tRNA(Tyr) = pseudouridine(35) in tRNA(Tyr). Functionally, dual specificity enzyme that catalyzes the synthesis of pseudouridine from uracil-2604 in 23S ribosomal RNA and from uracil-35 in the anticodon of tRNA(Tyr). The protein is Dual-specificity RNA pseudouridine synthase RluF (rluF) of Salmonella typhi.